Consider the following 493-residue polypeptide: Glutamate--tRNA ligase (493 aa).

A 'HIGH' region motif is present at residues 10 to 20; the sequence is PSPTGDPHVGT. A 'KMSKS' region motif is present at residues 251 to 255; that stretch reads KLSKR. Residue Lys-254 participates in ATP binding.

Belongs to the class-I aminoacyl-tRNA synthetase family. Glutamate--tRNA ligase type 1 subfamily. In terms of assembly, monomer.

It is found in the cytoplasm. It catalyses the reaction tRNA(Glu) + L-glutamate + ATP = L-glutamyl-tRNA(Glu) + AMP + diphosphate. Functionally, catalyzes the attachment of glutamate to tRNA(Glu) in a two-step reaction: glutamate is first activated by ATP to form Glu-AMP and then transferred to the acceptor end of tRNA(Glu). In Pseudomonas fluorescens (strain Pf0-1), this protein is Glutamate--tRNA ligase.